Consider the following 285-residue polypeptide: Protein FD (285 aa).

Residues 1–12 (MLSSAKHQRNHR) are compositionally biased toward basic residues. 5 disordered regions span residues 1–59 (MLSS…QKRS), 79–107 (NRHS…NSIF), 115–134 (LNQE…NGDS), 198–236 (SSSF…ARKQ), and 257–285 (KRQQ…TAPF). Positions 13 to 25 (LSATNKNQTLTKV) are enriched in polar residues. Over residues 26–50 (SSISSSSPSSSSSSSSTSSSSPLPS) the composition is skewed to low complexity. Residues 98 to 107 (HHNQNPNSIF) are compositionally biased toward polar residues. One can recognise a bZIP domain in the interval 214–277 (GNRRHKRMIK…AIQQPKKNTL (64 aa)). Positions 216–235 (RRHKRMIKNRESAARSRARK) are basic motif. The segment at 242-263 (LELEVAHLQAENARLKRQQDQL) is leucine-zipper. A compositionally biased stretch (polar residues) spans 272-285 (PKKNTLQRSSTAPF). Threonine 282 carries the phosphothreonine modification.

Belongs to the bZIP family. Self-interacts. Interacts with FT and FDP/BZIP27. Interacts with GRF3 and GRF4, and in a calcium-independent manner, with CPK6 and CPK33. Post-translationally, phosphorylated at Thr-282 in a calcium-dependent manner by CPK6 and CPK33. As to expression, highly expressed in shoot apex.

It localises to the nucleus. Transcription factor required for the transition to flowering promoted by FT. In Arabidopsis thaliana (Mouse-ear cress), this protein is Protein FD.